Consider the following 202-residue polypeptide: dITP/XTP pyrophosphatase (202 aa).

A substrate-binding site is contributed by 8–13 (TKNMGK). The Mg(2+) site is built by glutamate 41 and aspartate 70. Aspartate 70 (proton acceptor) is an active-site residue. Residues serine 71, 155–158 (FGYD), lysine 178, and 183–184 (HR) contribute to the substrate site.

It belongs to the HAM1 NTPase family. In terms of assembly, homodimer. The cofactor is Mg(2+).

The catalysed reaction is XTP + H2O = XMP + diphosphate + H(+). It carries out the reaction dITP + H2O = dIMP + diphosphate + H(+). The enzyme catalyses ITP + H2O = IMP + diphosphate + H(+). Its function is as follows. Pyrophosphatase that catalyzes the hydrolysis of nucleoside triphosphates to their monophosphate derivatives, with a high preference for the non-canonical purine nucleotides XTP (xanthosine triphosphate), dITP (deoxyinosine triphosphate) and ITP. Seems to function as a house-cleaning enzyme that removes non-canonical purine nucleotides from the nucleotide pool, thus preventing their incorporation into DNA/RNA and avoiding chromosomal lesions. This chain is dITP/XTP pyrophosphatase, found in Bacillus anthracis.